The primary structure comprises 316 residues: Ribose-phosphate pyrophosphokinase (316 aa).

ATP contacts are provided by residues 37-39 (DGE) and 96-97 (RQ). Mg(2+) contacts are provided by histidine 131 and aspartate 171. Lysine 195 is a catalytic residue. Residues arginine 197, aspartate 221, and 225–229 (DTGGT) each bind D-ribose 5-phosphate.

It belongs to the ribose-phosphate pyrophosphokinase family. Class I subfamily. In terms of assembly, homohexamer. Requires Mg(2+) as cofactor.

It localises to the cytoplasm. The catalysed reaction is D-ribose 5-phosphate + ATP = 5-phospho-alpha-D-ribose 1-diphosphate + AMP + H(+). Its pathway is metabolic intermediate biosynthesis; 5-phospho-alpha-D-ribose 1-diphosphate biosynthesis; 5-phospho-alpha-D-ribose 1-diphosphate from D-ribose 5-phosphate (route I): step 1/1. Involved in the biosynthesis of the central metabolite phospho-alpha-D-ribosyl-1-pyrophosphate (PRPP) via the transfer of pyrophosphoryl group from ATP to 1-hydroxyl of ribose-5-phosphate (Rib-5-P). The chain is Ribose-phosphate pyrophosphokinase from Haemophilus ducreyi (strain 35000HP / ATCC 700724).